The sequence spans 587 residues: Monocopper oxidase-like protein SKU5 (587 aa).

Positions 1 to 20 are cleaved as a signal peptide; the sequence is MDLFKILLLVFFVNISFCFA. Residues N14 and N58 are each glycosylated (N-linked (GlcNAc...) asparagine). A Cu cation-binding site is contributed by H80. Residues N107, N169, N200, N257, N278, N293, N342, N362, N430, and N444 are each glycosylated (N-linked (GlcNAc...) asparagine). H452 is a binding site for Cu cation. The N-linked (GlcNAc...) asparagine glycan is linked to N534. A lipid anchor (GPI-anchor amidated serine) is attached at S562. A propeptide spans 563-587 (removed in mature form); sequence ASKSIGFTSLSMVVMALVMMMMLQH.

The protein belongs to the multicopper oxidase family. Requires Cu cation as cofactor. Expressed in roots, hypocotyls, cotyledons, leaves, stems and flowers.

The protein resides in the secreted. Its subcellular location is the cell wall. It is found in the cell membrane. May be a monocopper oxidase of unknown specificity. Involved in directional growth processes, possibly by participating in cell wall expansion. In Arabidopsis thaliana (Mouse-ear cress), this protein is Monocopper oxidase-like protein SKU5 (SKU5).